Consider the following 129-residue polypeptide: MAKVYATGKRKTAIAKVWLTSGSGKLNINGQSLNDWLGGHEAIKMKVMQPLILTKQEKSVDIHAVTLGGGYSAQAEALRHGISKALNAYDVAFRAMLKPKGLLTRDSRVVERKKYGKRKARRSPQFSKR.

This sequence belongs to the universal ribosomal protein uS9 family.

This is Small ribosomal subunit protein uS9 from Helicobacter hepaticus (strain ATCC 51449 / 3B1).